The following is a 144-amino-acid chain: ALSAADAGLLAQSWAPVFANSDANGASFLVALFTQFPESANFFNDFKGKSLADIQASPKLRDVSSRIFARLNEFVSNAADAGKMGSMLQQFATEHAGFGVGSAQFQNVRSMFPGFVASLSAPAADAAWNSLFGLIISALQSAGK.

The residue at position 1 (Ala1) is an N-acetylalanine. Residues 1 to 144 form the Globin domain; the sequence is ALSAADAGLL…IISALQSAGK (144 aa). Position 95 (His95) interacts with heme b.

This sequence belongs to the globin family. Monomer.

This Aplysia juliana (Walking sea hare) protein is Globin.